A 527-amino-acid chain; its full sequence is Glutamyl-tRNA reductase 1, chloroplastic (527 aa).

The transit peptide at 1–43 (MAGATSATAAAGAFAAAKARGPAAACPWLVAAGGRRRSGVVRC) directs the protein to the chloroplast. Substrate is bound by residues 124 to 127 (TCNR), S184, 189 to 191 (EGQ), and Q195. C125 (nucleophile) is an active-site residue. 266–271 (GAGKMG) lines the NADP(+) pocket.

This sequence belongs to the glutamyl-tRNA reductase family. As to quaternary structure, homodimer.

It is found in the plastid. Its subcellular location is the chloroplast. It carries out the reaction (S)-4-amino-5-oxopentanoate + tRNA(Glu) + NADP(+) = L-glutamyl-tRNA(Glu) + NADPH + H(+). The protein operates within porphyrin-containing compound metabolism; protoporphyrin-IX biosynthesis; 5-aminolevulinate from L-glutamyl-tRNA(Glu): step 1/2. Catalyzes the NADPH-dependent reduction of glutamyl-tRNA(Glu) to glutamate 1-semialdehyde (GSA). In Hordeum vulgare (Barley), this protein is Glutamyl-tRNA reductase 1, chloroplastic (HEMA1).